The chain runs to 247 residues: Pyridoxine 5'-phosphate synthase (247 aa).

3-amino-2-oxopropyl phosphate is bound at residue asparagine 9. 11-12 (DH) contacts 1-deoxy-D-xylulose 5-phosphate. Arginine 20 provides a ligand contact to 3-amino-2-oxopropyl phosphate. Histidine 45 serves as the catalytic Proton acceptor. 1-deoxy-D-xylulose 5-phosphate-binding residues include arginine 47 and histidine 52. The active-site Proton acceptor is the glutamate 72. Threonine 102 lines the 1-deoxy-D-xylulose 5-phosphate pocket. The active-site Proton donor is histidine 193. 3-amino-2-oxopropyl phosphate is bound by residues glycine 194 and 215-216 (GH).

This sequence belongs to the PNP synthase family. As to quaternary structure, homooctamer; tetramer of dimers.

It localises to the cytoplasm. It catalyses the reaction 3-amino-2-oxopropyl phosphate + 1-deoxy-D-xylulose 5-phosphate = pyridoxine 5'-phosphate + phosphate + 2 H2O + H(+). It participates in cofactor biosynthesis; pyridoxine 5'-phosphate biosynthesis; pyridoxine 5'-phosphate from D-erythrose 4-phosphate: step 5/5. Catalyzes the complicated ring closure reaction between the two acyclic compounds 1-deoxy-D-xylulose-5-phosphate (DXP) and 3-amino-2-oxopropyl phosphate (1-amino-acetone-3-phosphate or AAP) to form pyridoxine 5'-phosphate (PNP) and inorganic phosphate. The polypeptide is Pyridoxine 5'-phosphate synthase (Blochmanniella floridana).